The following is a 366-amino-acid chain: Peptide chain release factor 2 (366 aa).

Gln249 is modified (N5-methylglutamine).

The protein belongs to the prokaryotic/mitochondrial release factor family. Post-translationally, methylated by PrmC. Methylation increases the termination efficiency of RF2.

The protein resides in the cytoplasm. Its function is as follows. Peptide chain release factor 2 directs the termination of translation in response to the peptide chain termination codons UGA and UAA. This Petrotoga mobilis (strain DSM 10674 / SJ95) protein is Peptide chain release factor 2.